We begin with the raw amino-acid sequence, 445 residues long: Phosphoglucosamine mutase (445 aa).

Ser-102 acts as the Phosphoserine intermediate in catalysis. Mg(2+) is bound by residues Ser-102, Asp-241, Asp-243, and Asp-245. Residue Ser-102 is modified to Phosphoserine.

The protein belongs to the phosphohexose mutase family. Mg(2+) serves as cofactor. Post-translationally, activated by phosphorylation.

The catalysed reaction is alpha-D-glucosamine 1-phosphate = D-glucosamine 6-phosphate. Functionally, catalyzes the conversion of glucosamine-6-phosphate to glucosamine-1-phosphate. This Escherichia coli O139:H28 (strain E24377A / ETEC) protein is Phosphoglucosamine mutase.